The sequence spans 21 residues: 78 kDa dihydrolipoyllysine-residue acetyltransferase component of pyruvate dehydrogenase complex (21 aa).

It belongs to the 2-oxoacid dehydrogenase family. Forms a 60-polypeptide structural core. It depends on (R)-lipoate as a cofactor.

Its subcellular location is the mitochondrion matrix. It carries out the reaction N(6)-[(R)-dihydrolipoyl]-L-lysyl-[protein] + acetyl-CoA = N(6)-[(R)-S(8)-acetyldihydrolipoyl]-L-lysyl-[protein] + CoA. Functionally, the pyruvate dehydrogenase complex catalyzes the overall conversion of pyruvate to acetyl-CoA and CO(2). It contains multiple copies of three enzymatic components: pyruvate dehydrogenase (E1), dihydrolipoamide acetyltransferase (E2) and lipoamide dehydrogenase (E3). The chain is 78 kDa dihydrolipoyllysine-residue acetyltransferase component of pyruvate dehydrogenase complex from Solanum tuberosum (Potato).